The following is a 165-amino-acid chain: Phosphopantetheine adenylyltransferase (165 aa).

A substrate-binding site is contributed by Ser-10. ATP is bound by residues 10–11 (SF) and His-18. Residues Lys-42, Thr-79, and Arg-93 each coordinate substrate. ATP-binding positions include 94–96 (GLR), Glu-104, and 129–135 (VRPITAT).

Belongs to the bacterial CoaD family. As to quaternary structure, homohexamer. Requires Mg(2+) as cofactor.

It localises to the cytoplasm. It catalyses the reaction (R)-4'-phosphopantetheine + ATP + H(+) = 3'-dephospho-CoA + diphosphate. The protein operates within cofactor biosynthesis; coenzyme A biosynthesis; CoA from (R)-pantothenate: step 4/5. Functionally, reversibly transfers an adenylyl group from ATP to 4'-phosphopantetheine, yielding dephospho-CoA (dPCoA) and pyrophosphate. The polypeptide is Phosphopantetheine adenylyltransferase (Afipia carboxidovorans (strain ATCC 49405 / DSM 1227 / KCTC 32145 / OM5) (Oligotropha carboxidovorans)).